The primary structure comprises 546 residues: MAAKDVKFGDSARKKMLVGVNVLADAVKATLGPKGRNVVLAKSFGAPTITKDGVSVAKEIELKDAFENMGAQLVKEVASKANDAAGDGTTTATVLAQAIVNEGLKAVAAGMNPMDLKRGIDKATAAIVAELKNLSKPCADSKAIAQVGTISANSDNSIGEIIAEAMEKVGKEGVITVEEGSGLENELSVVEGMQFDRGYLSPYFVNKPDTMVAELEGPLLLLVDKKISNIRELLPVLEAVAKAGRPLLIVAEDVEGEALATLVVNNMRGIVKVAAVKAPGFGDRRKAMLQDIATLTGGQVISEEIGLSLETATLEHLGNAKRVILSKENTTIIDGAGADGDIEARVKQIRAQIEETSSDYDREKLQERLAKLAGGVAVIKVGAGTEVEMKEKKARVEDALHATRAAVEEGVVPGGGVALVRALAAIADLKGDNEEQNVGIALLRRAVEAPLRQITANAGDEPSVVADKVKQGSGNFGYNAATGEYGDMIEMGILDPAKVTRSALQAAASIGGLMITTEAMVADLPEDKPAAGMPDMGGMGGMGGMM.

ATP-binding positions include threonine 30–proline 33, lysine 51, aspartate 87–threonine 91, glycine 415, asparagine 479–alanine 481, and aspartate 495.

The protein belongs to the chaperonin (HSP60) family. As to quaternary structure, forms a cylinder of 14 subunits composed of two heptameric rings stacked back-to-back. Interacts with the co-chaperonin GroES.

It localises to the cytoplasm. The enzyme catalyses ATP + H2O + a folded polypeptide = ADP + phosphate + an unfolded polypeptide.. Functionally, together with its co-chaperonin GroES, plays an essential role in assisting protein folding. The GroEL-GroES system forms a nano-cage that allows encapsulation of the non-native substrate proteins and provides a physical environment optimized to promote and accelerate protein folding. In Pseudomonas entomophila (strain L48), this protein is Chaperonin GroEL.